Reading from the N-terminus, the 230-residue chain is Ion-translocating oxidoreductase complex subunit E (230 aa).

6 consecutive transmembrane segments (helical) span residues 18 to 38, 39 to 59, 63 to 83, 86 to 106, 125 to 145, and 182 to 202; these read ALVQ…ATNA, LGLG…VSAL, TPAE…VSAV, LINA…PLIV, WLSA…MFVL, and PFLL…MLAV.

This sequence belongs to the NqrDE/RnfAE family. In terms of assembly, the complex is composed of six subunits: RsxA, RsxB, RsxC, RsxD, RsxE and RsxG.

Its subcellular location is the cell inner membrane. In terms of biological role, part of a membrane-bound complex that couples electron transfer with translocation of ions across the membrane. Required to maintain the reduced state of SoxR. The protein is Ion-translocating oxidoreductase complex subunit E of Salmonella newport (strain SL254).